The sequence spans 425 residues: Dihydroorotase (425 aa).

Zn(2+) contacts are provided by histidine 56 and histidine 58. Substrate-binding positions include 58 to 60 (HYR) and asparagine 90. Zn(2+) is bound by residues aspartate 148, histidine 175, and histidine 228. Residue asparagine 274 participates in substrate binding. Aspartate 301 serves as a coordination point for Zn(2+). Residue aspartate 301 is part of the active site. Substrate-binding positions include histidine 305 and 319–320 (FG).

The protein belongs to the metallo-dependent hydrolases superfamily. DHOase family. Class I DHOase subfamily. Zn(2+) serves as cofactor.

It carries out the reaction (S)-dihydroorotate + H2O = N-carbamoyl-L-aspartate + H(+). It participates in pyrimidine metabolism; UMP biosynthesis via de novo pathway; (S)-dihydroorotate from bicarbonate: step 3/3. In terms of biological role, catalyzes the reversible cyclization of carbamoyl aspartate to dihydroorotate. The chain is Dihydroorotase from Lactobacillus johnsonii (strain CNCM I-12250 / La1 / NCC 533).